The primary structure comprises 260 residues: Acetylglutamate kinase (260 aa).

Substrate is bound by residues 46 to 47 (GG), Arg-68, and Asn-160.

It belongs to the acetylglutamate kinase family. ArgB subfamily.

The protein resides in the cytoplasm. The catalysed reaction is N-acetyl-L-glutamate + ATP = N-acetyl-L-glutamyl 5-phosphate + ADP. It functions in the pathway amino-acid biosynthesis; L-arginine biosynthesis; N(2)-acetyl-L-ornithine from L-glutamate: step 2/4. Catalyzes the ATP-dependent phosphorylation of N-acetyl-L-glutamate. This is Acetylglutamate kinase from Shewanella sp. (strain ANA-3).